The sequence spans 238 residues: Type III pantothenate kinase (238 aa).

An ATP-binding site is contributed by 6–13 (DSGNTRIK). Substrate is bound by residues Tyr-90 and 97–100 (GVDR). Catalysis depends on Asp-99, which acts as the Proton acceptor. Thr-122 is a binding site for ATP. Residue Thr-172 coordinates substrate.

It belongs to the type III pantothenate kinase family. In terms of assembly, homodimer. The cofactor is NH4(+). It depends on K(+) as a cofactor.

The protein localises to the cytoplasm. It carries out the reaction (R)-pantothenate + ATP = (R)-4'-phosphopantothenate + ADP + H(+). It functions in the pathway cofactor biosynthesis; coenzyme A biosynthesis; CoA from (R)-pantothenate: step 1/5. Functionally, catalyzes the phosphorylation of pantothenate (Pan), the first step in CoA biosynthesis. In Dechloromonas aromatica (strain RCB), this protein is Type III pantothenate kinase.